Reading from the N-terminus, the 88-residue chain is Small ribosomal subunit protein uS17 (88 aa).

It belongs to the universal ribosomal protein uS17 family. In terms of assembly, part of the 30S ribosomal subunit.

Its function is as follows. One of the primary rRNA binding proteins, it binds specifically to the 5'-end of 16S ribosomal RNA. This Pseudomonas aeruginosa (strain LESB58) protein is Small ribosomal subunit protein uS17.